An 842-amino-acid chain; its full sequence is Glycogen phosphorylase, muscle form (842 aa).

Position 2 is an N-acetylserine (S2). S15 is modified (phosphoserine; by PHK; in form phosphorylase A). 2 residues coordinate AMP: D43 and Y76. Residues Y204 and Y227 each carry the phosphotyrosine modification. 310 to 319 contributes to the AMP binding site; sequence RRFKSSKFGC. Residue S430 is modified to Phosphoserine. Y473 carries the post-translational modification Phosphotyrosine. K681 bears the N6-(pyridoxal phosphate)lysine mark. A phosphoserine mark is found at S747 and S748.

It belongs to the glycogen phosphorylase family. Homodimer. Homotetramer; to form the enzymatically active phosphorylase A. Pyridoxal 5'-phosphate is required as a cofactor. Phosphorylation of Ser-15 converts phosphorylase B (unphosphorylated) to phosphorylase A.

The catalysed reaction is [(1-&gt;4)-alpha-D-glucosyl](n) + phosphate = [(1-&gt;4)-alpha-D-glucosyl](n-1) + alpha-D-glucose 1-phosphate. With respect to regulation, allosterically regulated through the non-covalent binding of metabolites, being activated by AMP and inhibited by ATP, ADP, and glucose-6-phosphate. The activity is also controlled by post-translational modifications including phosphorylation. Its function is as follows. Allosteric enzyme that catalyzes the rate-limiting step in glycogen catabolism, the phosphorolytic cleavage of glycogen to produce glucose-1-phosphate, and plays a central role in maintaining cellular and organismal glucose homeostasis. The sequence is that of Glycogen phosphorylase, muscle form from Ovis aries (Sheep).